The following is a 134-amino-acid chain: ATP synthase epsilon chain (134 aa).

This sequence belongs to the ATPase epsilon chain family. In terms of assembly, F-type ATPases have 2 components, CF(1) - the catalytic core - and CF(0) - the membrane proton channel. CF(1) has five subunits: alpha(3), beta(3), gamma(1), delta(1), epsilon(1). CF(0) has three main subunits: a, b and c.

It localises to the cell inner membrane. Produces ATP from ADP in the presence of a proton gradient across the membrane. The protein is ATP synthase epsilon chain of Sinorhizobium fredii (strain NBRC 101917 / NGR234).